Reading from the N-terminus, the 355-residue chain is Homeotic protein knotted-1 (355 aa).

Residues 205 to 233 (KCEGVGSSEEDQDNSGGETELPEIDPRAE) are disordered. One can recognise an ELK domain in the interval 236-256 (ELKNHLLRKYSGYLSSLKQEL). Positions 257–320 (SKKKKKGKLP…NQRKRHWKPS (64 aa)) form a DNA-binding region, homeobox; TALE-type.

The protein belongs to the TALE/KNOX homeobox family. As to expression, expressed in the apical meristems, in the newly emerged lateral primordia in the floral bud, in their vascular bundles and in the cortex parenchyma of the floral pedicle. Also present in the lateral tips of leaf primordia.

Its subcellular location is the nucleus. Appears to be involved in meristem formation and in the regulation of leaf morphology. Misexpression makes the leaf more compound which is always associated with growth retardation and loss of apical dominance, resulting in dwarfed, bushy plants. Probably binds to the DNA sequence 5'-TGAC-3'. This is Homeotic protein knotted-1 (KN1) from Solanum lycopersicum (Tomato).